Here is a 279-residue protein sequence, read N- to C-terminus: UPF0276 protein SO_2008 (279 aa).

This sequence belongs to the UPF0276 family.

This chain is UPF0276 protein SO_2008, found in Shewanella oneidensis (strain ATCC 700550 / JCM 31522 / CIP 106686 / LMG 19005 / NCIMB 14063 / MR-1).